A 510-amino-acid polypeptide reads, in one-letter code: Mitogen-activated protein kinase 9 (510 aa).

A Protein kinase domain is found at Tyr-23–Phe-314. Residues Ile-29–Val-37 and Lys-52 each bind ATP. Residue Asp-149 is the Proton acceptor of the active site. Residue Thr-185 is modified to Phosphothreonine. The TXY signature appears at Thr-185–Tyr-187. At Tyr-187 the chain carries Phosphotyrosine. Thr-190 carries the post-translational modification Phosphothreonine. Residues Asn-393–Thr-461 are disordered. Residues Leu-410 to Asn-431 show a composition bias toward basic and acidic residues. Residues Ser-433–Thr-461 are compositionally biased toward polar residues.

Belongs to the protein kinase superfamily. CMGC Ser/Thr protein kinase family. MAP kinase subfamily. Dually phosphorylated on Thr-185 and Tyr-187, which activates the enzyme.

The catalysed reaction is L-seryl-[protein] + ATP = O-phospho-L-seryl-[protein] + ADP + H(+). It catalyses the reaction L-threonyl-[protein] + ATP = O-phospho-L-threonyl-[protein] + ADP + H(+). Its activity is regulated as follows. Activated by threonine and tyrosine phosphorylation. This Arabidopsis thaliana (Mouse-ear cress) protein is Mitogen-activated protein kinase 9 (MPK9).